A 454-amino-acid polypeptide reads, in one-letter code: Kynurenine--oxoglutarate transaminase 3 (454 aa).

Gly71 contacts substrate. An N6-acetyllysine; alternate modification is found at Lys116. Lys116 is modified (N6-succinyllysine; alternate). Asn218 is a substrate binding site. N6-(pyridoxal phosphate)lysine is present on Lys280. Arg429 contributes to the substrate binding site.

It belongs to the class-I pyridoxal-phosphate-dependent aminotransferase family. Homodimer. It depends on pyridoxal 5'-phosphate as a cofactor.

It catalyses the reaction L-kynurenine + 2-oxoglutarate = kynurenate + L-glutamate + H2O. It carries out the reaction L-kynurenine + glyoxylate = kynurenate + glycine + H2O. The catalysed reaction is 3-hydroxy-L-kynurenine + glyoxylate = xanthurenate + glycine + H2O. The enzyme catalyses an S-substituted L-cysteine + H2O = a thiol + pyruvate + NH4(+). The protein operates within amino-acid degradation; L-kynurenine degradation; kynurenate from L-kynurenine: step 1/2. Its function is as follows. Catalyzes the irreversible transamination of the L-tryptophan metabolite L-kynurenine to form kynurenic acid (KA), an intermediate in the tryptophan catabolic pathway which is also a broad spectrum antagonist of the three ionotropic excitatory amino acid receptors among others. May catalyze the beta-elimination of S-conjugates and Se-conjugates of L-(seleno)cysteine, resulting in the cleavage of the C-S or C-Se bond. Has transaminase activity towards L-kynurenine, tryptophan, phenylalanine, serine, cysteine, methionine, histidine, glutamine and asparagine with glyoxylate as an amino group acceptor (in vitro). Has lower activity with 2-oxoglutarate as amino group acceptor (in vitro). The protein is Kynurenine--oxoglutarate transaminase 3 of Rattus norvegicus (Rat).